A 435-amino-acid polypeptide reads, in one-letter code: ATP-dependent protease ATPase subunit HslU (435 aa).

ATP contacts are provided by residues V18, 60–65 (GCGKTE), D248, E313, and R385.

Belongs to the ClpX chaperone family. HslU subfamily. As to quaternary structure, a double ring-shaped homohexamer of HslV is capped on each side by a ring-shaped HslU homohexamer. The assembly of the HslU/HslV complex is dependent on binding of ATP.

Its subcellular location is the cytoplasm. Functionally, ATPase subunit of a proteasome-like degradation complex; this subunit has chaperone activity. The binding of ATP and its subsequent hydrolysis by HslU are essential for unfolding of protein substrates subsequently hydrolyzed by HslV. HslU recognizes the N-terminal part of its protein substrates and unfolds these before they are guided to HslV for hydrolysis. This chain is ATP-dependent protease ATPase subunit HslU, found in Beijerinckia indica subsp. indica (strain ATCC 9039 / DSM 1715 / NCIMB 8712).